A 161-amino-acid chain; its full sequence is Nucleotide-binding protein Swoo_3646 (161 aa).

The protein belongs to the YajQ family.

Its function is as follows. Nucleotide-binding protein. The chain is Nucleotide-binding protein Swoo_3646 from Shewanella woodyi (strain ATCC 51908 / MS32).